Here is a 463-residue protein sequence, read N- to C-terminus: 23S rRNA (uracil(1939)-C(5))-methyltransferase RlmD (463 aa).

Residues 6 to 76 form the TRAM domain; the sequence is KSRKPQQPEY…KRLEEAEMVA (71 aa). Residues cysteine 90, cysteine 96, cysteine 99, and cysteine 178 each contribute to the [4Fe-4S] cluster site. S-adenosyl-L-methionine contacts are provided by glutamine 288, phenylalanine 317, asparagine 322, glutamate 341, aspartate 368, and aspartate 389. Cysteine 415 serves as the catalytic Nucleophile.

This sequence belongs to the class I-like SAM-binding methyltransferase superfamily. RNA M5U methyltransferase family. RlmD subfamily.

It catalyses the reaction uridine(1939) in 23S rRNA + S-adenosyl-L-methionine = 5-methyluridine(1939) in 23S rRNA + S-adenosyl-L-homocysteine + H(+). In terms of biological role, catalyzes the formation of 5-methyl-uridine at position 1939 (m5U1939) in 23S rRNA. The protein is 23S rRNA (uracil(1939)-C(5))-methyltransferase RlmD of Acinetobacter baumannii (strain SDF).